The following is a 469-amino-acid chain: MSLNPVIVGGGPAGMAAAIELAEHGVRSTLIEEASRLGGVVYRGPLRDGVQLDYLGPRYCEMLAKLHGDFADHEQMIDVRLNSRVVGAEGTQSLVLLDGEEQVQQVSYEQLILAAGCHERSVPFPGWTLPGVKLLGGLQLQIKSGVVKPQSPVVIAGTGPLLPLVACQLHASGVRVAGVYEACALGKIAKQSLAMLNKPQLFLDGLSMLAYLKLHGIALRYGWGVVEAQGQDALSVVTVAPYSSDWQPDMAKAQRIAAQTLAVGYGFIPRTQLSQQMGLEHNFSDDGYLRASANAWQQSSEPHVHLAGDMGGIRGGEAAMLSGRIAALSILMQRGVLSNEAALQRRQGYERKLASILRFRGAVDRYTARGAGQVELPKGDTVICRCEHTTRNDIERALSQGVQDMASLKMRTRVSMGDCQGRMCVGYCSDRLRQATGRKDVGWIRPRFPLDPIPFSAFPPSDQEVSQHD.

As to quaternary structure, heterotrimer of HcnA, HcnB and HcnC.

The protein resides in the cell membrane. It carries out the reaction glycine + 2 A = hydrogen cyanide + 2 AH2 + CO2. Functionally, a three-component membrane-bound flavoenzyme that catalyzes the formation of hydrogen cyanide, a secondary metabolite, by transfer of electrons to a cyanide-resistant branch of the aerobic respiratory chain. Contributes to suppression of black root rot of tobacco. The protein is Hydrogen cyanide synthase subunit HcnB of Pseudomonas protegens (strain DSM 19095 / LMG 27888 / CFBP 6595 / CHA0).